The primary structure comprises 223 residues: Glutathione S-transferase U6 (223 aa).

The 80-residue stretch at glutamate 5 to proline 84 folds into the GST N-terminal domain. Glutathione-binding positions include serine 15 to proline 16, asparagine 41 to lysine 42, lysine 55 to isoleucine 56, and glutamate 68 to serine 69. The region spanning aspartate 89–methionine 216 is the GST C-terminal domain. A Phosphothreonine modification is found at threonine 150.

It belongs to the GST superfamily. Tau family.

Its subcellular location is the cytoplasm. It localises to the cytosol. It carries out the reaction RX + glutathione = an S-substituted glutathione + a halide anion + H(+). Functionally, may be involved in the conjugation of reduced glutathione to a wide number of exogenous and endogenous hydrophobic electrophiles and have a detoxification role against certain herbicides. The sequence is that of Glutathione S-transferase U6 (GSTU6) from Arabidopsis thaliana (Mouse-ear cress).